Reading from the N-terminus, the 496-residue chain is Trimethylamine methyltransferase MttB (496 aa).

Position 331 (Pyl-331) is a non-standard amino acid, pyrrolysine.

The protein belongs to the trimethylamine methyltransferase family.

The enzyme catalyses Co(I)-[trimethylamine-specific corrinoid protein] + trimethylamine + H(+) = methyl-Co(III)-[trimethylamine-specific corrinoid protein] + dimethylamine. Its function is as follows. Catalyzes the transfer of a methyl group from trimethylamine to the corrinoid cofactor of MttC. This chain is Trimethylamine methyltransferase MttB, found in Desulfitobacterium hafniense (strain DSM 10664 / DCB-2).